We begin with the raw amino-acid sequence, 333 residues long: Nucleoid-associated protein PSPPH_1145 (333 aa).

It belongs to the YejK family.

It is found in the cytoplasm. It localises to the nucleoid. The polypeptide is Nucleoid-associated protein PSPPH_1145 (Pseudomonas savastanoi pv. phaseolicola (strain 1448A / Race 6) (Pseudomonas syringae pv. phaseolicola (strain 1448A / Race 6))).